We begin with the raw amino-acid sequence, 313 residues long: Interferon-inducible double-stranded RNA-dependent protein kinase activator A (313 aa).

The interval 1–21 (MSQSRHRAAAPPMEREDSGTF) is disordered. Sufficient for self-association and interaction with TARBP2 stretches follow at residues 1–103 (MSQS…KANA), 102–195 (NASI…FSNI), and 195–313 (ISPE…AERK). Residue serine 18 is modified to Phosphoserine. DRBM domains lie at 34 to 101 (TPIQ…ILKA), 126 to 194 (NPIG…KFSN), and 240 to 308 (DYIQ…YLKI). Residues serine 167, serine 246, and serine 287 each carry the phosphoserine modification.

The protein belongs to the PRKRA family. As to quaternary structure, homodimer. Interacts with EIF2AK2/PKR through its DRBM domains. Interacts with DICER1, AGO2 and TARBP2. Also able to interact with dsRNA. Interacts with UBC9. Forms a complex with UBC9 and p53/TP53. Interacts with DUS2L (via DRBM domain). In terms of processing, phosphorylated at Ser-246 in unstressed cells and at Ser-287 in stressed cells. Phosphorylation at Ser-246 appears to be a prerequisite for subsequent phosphorylation at Ser-287. Phosphorylation at Ser-246 and Ser-287 are necessary for activation of EIF2AK2/PKR under conditions of stress.

The protein resides in the cytoplasm. It is found in the perinuclear region. Its function is as follows. Activates EIF2AK2/PKR in the absence of double-stranded RNA (dsRNA), leading to phosphorylation of EIF2S1/EFI2-alpha and inhibition of translation and induction of apoptosis. Required for siRNA production by DICER1 and for subsequent siRNA-mediated post-transcriptional gene silencing. Does not seem to be required for processing of pre-miRNA to miRNA by DICER1. Promotes UBC9-p53/TP53 association and sumoylation and phosphorylation of p53/TP53 at 'Lys-386' at 'Ser-392' respectively and enhances its activity in a EIF2AK2/PKR-dependent manner. In Bos taurus (Bovine), this protein is Interferon-inducible double-stranded RNA-dependent protein kinase activator A (PRKRA).